Consider the following 109-residue polypeptide: Hainantoxin-XVIII-4 (109 aa).

The first 18 residues, 1–18, serve as a signal peptide directing secretion; the sequence is MKLSIIIIATSLVIAVVA. Residues 19-46 constitute a propeptide that is removed on maturation; sequence FPSKDSKAIENDKTEQRMEIVVQETARA. 3 disulfides stabilise this stretch: Cys-55/Cys-68, Cys-59/Cys-108, and Cys-61/Cys-81.

Belongs to the neurotoxin 25 family. F7 subfamily. In terms of tissue distribution, expressed by the venom gland.

It is found in the secreted. Putative ion channel inhibitor. This is Hainantoxin-XVIII-4 from Cyriopagopus hainanus (Chinese bird spider).